A 445-amino-acid chain; its full sequence is Argininosuccinate lyase (445 aa).

This sequence belongs to the lyase 1 family. Argininosuccinate lyase subfamily.

The protein localises to the cytoplasm. The catalysed reaction is 2-(N(omega)-L-arginino)succinate = fumarate + L-arginine. Its pathway is amino-acid biosynthesis; L-arginine biosynthesis; L-arginine from L-ornithine and carbamoyl phosphate: step 3/3. This Xylella fastidiosa (strain Temecula1 / ATCC 700964) protein is Argininosuccinate lyase.